Reading from the N-terminus, the 272-residue chain is MSGFEQLFPGTLPRLVMFDLDGTLIDSVPDLAAAVDRMLLELGRPPAGLEAVRHWVGNGAQVLVRRALAGGIDHADVDDALAEQALALFMDAYAESHELTVVYPGVRDTLRWLRKQGVEMALITNKPERFVGPLLDQMKIGNFFRWIIGGDTLPQKKPDPAALLFVMQMAGVTPQQSLFVGDSRSDVQAAKAAGVQCVGLTYGYNHGRPIDAESPSLVIDDLRALLPGCADPATGITLADLQASQDRESTVAVTGKFWMKVIKALARWRWRA.

Residue aspartate 19 is the Nucleophile of the active site. Mg(2+) contacts are provided by aspartate 19, aspartate 21, and aspartate 182.

It belongs to the HAD-like hydrolase superfamily. CbbY/CbbZ/Gph/YieH family. The cofactor is Mg(2+).

It carries out the reaction 2-phosphoglycolate + H2O = glycolate + phosphate. It functions in the pathway organic acid metabolism; glycolate biosynthesis; glycolate from 2-phosphoglycolate: step 1/1. Its function is as follows. Specifically catalyzes the dephosphorylation of 2-phosphoglycolate. Is involved in the dissimilation of the intracellular 2-phosphoglycolate formed during the DNA repair of 3'-phosphoglycolate ends, a major class of DNA lesions induced by oxidative stress. This chain is Phosphoglycolate phosphatase, found in Pseudomonas putida (strain ATCC 47054 / DSM 6125 / CFBP 8728 / NCIMB 11950 / KT2440).